The following is a 402-amino-acid chain: Argininosuccinate synthase (402 aa).

Residue 9–17 participates in ATP binding; the sequence is AYSGGLDTS. Tyrosine 86 is a binding site for L-citrulline. Position 116 (glycine 116) interacts with ATP. 3 residues coordinate L-aspartate: threonine 118, asparagine 122, and aspartate 123. Asparagine 122 lines the L-citrulline pocket. L-citrulline-binding residues include arginine 126, serine 174, serine 183, glutamate 259, and tyrosine 271.

It belongs to the argininosuccinate synthase family. Type 1 subfamily. Homotetramer.

The protein localises to the cytoplasm. The enzyme catalyses L-citrulline + L-aspartate + ATP = 2-(N(omega)-L-arginino)succinate + AMP + diphosphate + H(+). It participates in amino-acid biosynthesis; L-arginine biosynthesis; L-arginine from L-ornithine and carbamoyl phosphate: step 2/3. In Anoxybacillus flavithermus (strain DSM 21510 / WK1), this protein is Argininosuccinate synthase.